The sequence spans 139 residues: Cytochrome c-type biogenesis protein CcmE 2 (139 aa).

Over 1 to 9 the chain is Cytoplasmic; that stretch reads MASLKKSRR. Residues 10–30 form a helical; Signal-anchor for type II membrane protein membrane-spanning segment; it reads VRLILFSGVALVSATALIGYA. Residues 31 to 139 lie on the Periplasmic side of the membrane; that stretch reads MRDGIQFFRT…ELAEMEALRD (109 aa). 2 residues coordinate heme: histidine 122 and tyrosine 126.

This sequence belongs to the CcmE/CycJ family.

It localises to the cell inner membrane. Heme chaperone required for the biogenesis of c-type cytochromes. Transiently binds heme delivered by CcmC and transfers the heme to apo-cytochromes in a process facilitated by CcmF and CcmH. In Ruegeria pomeroyi (strain ATCC 700808 / DSM 15171 / DSS-3) (Silicibacter pomeroyi), this protein is Cytochrome c-type biogenesis protein CcmE 2.